Here is a 1463-residue protein sequence, read N- to C-terminus: Collagen alpha-1(I) chain (1463 aa).

The signal sequence occupies residues 1 to 22; it reads MFSFVDLRLLLLLAATALLTHG. Residues 23–161 constitute a propeptide, N-terminal propeptide; it reads QEEGQEEGQE…PPGLGGNFAP (139 aa). Residues 38 to 96 enclose the VWFC domain; that stretch reads VTCVQNGLRYHDRDVWKPVPCQICVCDNGNVLCDDVICDELKDCPNAKVPTDECCPVCP. The tract at residues 98–1217 is disordered; that stretch reads GQESPTDQET…AHDGGRYYRA (1120 aa). Residues 138-153 show a composition bias toward pro residues; the sequence is PGLPGPPGPPGPPGPP. Gln162 carries the post-translational modification Pyrrolidone carboxylic acid. A nonhelical region (N-terminal) region spans residues 162 to 177; the sequence is QLSYGYDEKSTGISVP. Lys170 carries the post-translational modification Allysine. Residue Ser171 is modified to Phosphoserine. The tract at residues 178–1191 is triple-helical region; it reads GPMGPSGPRG…PGPPGPPGPP (1014 aa). Pro189, Pro192, Pro195, Pro204, Pro207, Pro210, Pro225, Pro240, Pro246, Pro255, and Pro261 each carry 4-hydroxyproline. Residues 197 to 216 are compositionally biased toward low complexity; the sequence is PQGFQGPPGEPGEPGASGPM. Basic and acidic residues predominate over residues 228-242; that stretch reads NGDDGEAGKPGRPGE. A 5-hydroxylysine; alternate modification is found at Lys264. O-linked (Gal...) hydroxylysine; alternate glycosylation occurs at Lys264. Ser270 carries the phosphoserine modification. Residues Lys276 and Lys285 each carry the 5-hydroxylysine modification. The span at 278 to 294 shows a compositional bias: low complexity; sequence DAGPAGPKGEPGSPGEN. 4-hydroxyproline is present on residues Pro288, Pro291, Pro297, Pro306, and Pro312. Residues 317 to 330 show a composition bias toward low complexity; that stretch reads PAGARGNDGATGAA. A compositionally biased stretch (pro residues) spans 332 to 344; it reads PPGPTGPAGPPGF. Pro333, Pro342, and Pro345 each carry 4-hydroxyproline. Positions 349 to 358 are enriched in gly residues; it reads GAKGEGGPQG. Residues Pro372, Pro375, Pro387, Pro393, Pro402, Pro408, Pro411, and Pro426 each carry the 4-hydroxyproline modification. Positions 378–417 are enriched in low complexity; it reads AGAAGPAGNPGADGQPGAKGANGAPGIAGAPGFPGARGPS. Lys429 bears the 5-hydroxylysine mark. Pro435, Pro438, Pro450, Pro459, Pro474, Pro480, Pro489, and Pro495 each carry 4-hydroxyproline. Gly residues predominate over residues 484-493; that stretch reads GERGGPGSRG. A compositionally biased stretch (low complexity) spans 494–525; the sequence is FPGADGVAGPKGPAGERGAPGPAGPKGSPGEA. 5-hydroxylysine is present on Lys504. Residues Pro513, Pro522, Pro528, Pro534, Pro543, Pro546, Pro555, Pro564, Pro570, Pro582, Pro591, Pro600, Pro603, Pro621, Pro639, Pro645, Pro651, Pro657, Pro663, Pro669, Pro681, Pro690, Pro702, Pro714, Pro717, Pro723, Pro729, and Pro738 each carry the 4-hydroxyproline modification. Positions 537–563 are enriched in low complexity; sequence KGLTGSPGSPGPDGKTGPPGPAGQDGR. Positions 572-591 are enriched in low complexity; the sequence is ARGQAGVMGFPGPKGAAGEP. The segment covering 633-660 has biased composition (low complexity); that stretch reads QGPAGSPGFQGLPGPAGPPGEAGKPGEQ. Positions 695-723 are enriched in low complexity; that stretch reads PRGANGAPGNDGAKGDAGAPGAPGSQGAP. The Cell attachment site signature appears at 744–746; it reads RGD. At Lys750 the chain carries 5-hydroxylysine. 4-hydroxyproline is present on residues Pro756, Pro771, and Pro777. Low complexity predominate over residues 783–797; sequence AGPSGPAGPTGARGA. At Ser786 the chain carries Phosphoserine. 8 positions are modified to 4-hydroxyproline: Pro798, Pro804, Pro807, Pro816, Pro822, Pro840, Pro849, and Pro858. Low complexity predominate over residues 810–837; that stretch reads AGFAGPPGADGQPGAKGEPGDAGAKGDA. A compositionally biased stretch (pro residues) spans 839 to 851; that stretch reads PPGPAGPAGPPGP. Positions 852–882 are enriched in low complexity; sequence IGNVGAPGPKGARGSAGPPGATGFPGAAGRV. Lys861 bears the 5-hydroxylysine mark. 4-hydroxyproline occurs at positions 870 and 876. Pro884 is subject to 3-hydroxyproline. A 4-hydroxyproline mark is found at Pro885, Pro894, Pro897, Pro918, Pro927, Pro936, Pro945, Pro963, Pro972, Pro975, Pro981, Pro996, Pro1002, Pro1008, Pro1017, and Pro1023. The segment covering 930-954 has biased composition (low complexity); it reads AGEKGAPGADGPAGAPGTPGPQGIA. A compositionally biased stretch (pro residues) spans 995–1005; the sequence is PPGPMGPPGLA. The residue at position 1032 (Lys1032) is a 5-hydroxylysine. The span at 1041 to 1056 shows a compositional bias: pro residues; it reads AGPPGAPGAPGAPGPV. 3 positions are modified to 4-hydroxyproline: Pro1044, Pro1047, and Pro1050. Positions 1077 to 1091 are enriched in low complexity; sequence IGPVGARGPAGPQGP. Positions 1092–1094 match the Cell attachment site motif; it reads RGD. Positions 1092 to 1106 are enriched in basic and acidic residues; sequence RGDKGETGEQGDRGI. Position 1095 is a 5-hydroxylysine (Lys1095). Lys1107 is subject to 5-hydroxylysine; alternate. The O-linked (Gal...) hydroxylysine; alternate glycan is linked to Lys1107. A 4-hydroxyproline mark is found at Pro1119, Pro1122, Pro1125, Pro1143, and Pro1158. Low complexity predominate over residues 1125 to 1149; it reads PGEQGPSGASGPAGPRGPPGSAGSP. Position 1163 is a 3-hydroxyproline (Pro1163). Position 1164 is a 4-hydroxyproline (Pro1164). Pro residues predominate over residues 1176 to 1191; that stretch reads AGPPGPPGPPGPPGPP. The residue at position 1178 (Pro1178) is a 3-hydroxyproline. A 4-hydroxyproline modification is found at Pro1179. 3-hydroxyproline is present on Pro1181. Position 1182 is a 4-hydroxyproline (Pro1182). Position 1184 is a 3-hydroxyproline (Pro1184). A 4-hydroxyproline mark is found at Pro1185, Pro1188, and Pro1191. Residues 1192-1215 form a nonhelical region (C-terminal) region; sequence SGGYDLSFLPQPPQEKAHDGGRYY. Residues 1206-1217 show a composition bias toward basic and acidic residues; it reads EKAHDGGRYYRA. Lys1207 carries the post-translational modification Allysine. Positions 1218-1463 are cleaved as a propeptide — C-terminal propeptide; that stretch reads DDANVVRDRD…GFDVGPACFL (246 aa). Residues 1228–1463 form the Fibrillar collagen NC1 domain; sequence LEVDTTLKSL…GFDVGPACFL (236 aa). 3 disulfides stabilise this stretch: Cys1258-Cys1290, Cys1298-Cys1461, and Cys1369-Cys1414. Ca(2+)-binding residues include Asp1276, Asn1278, Gln1279, Cys1281, and Asp1284.

The protein belongs to the fibrillar collagen family. Trimers of one alpha 2(I) and two alpha 1(I) chains. Interacts with MRC2. Interacts with TRAM2. Interacts with MFAP4 in a Ca (2+)-dependent manner. In terms of processing, contains mostly 4-hydroxyproline. Proline residues at the third position of the tripeptide repeating unit (G-X-Y) are hydroxylated in some or all of the chains. Contains 3-hydroxyproline at a few sites. This modification occurs on the first proline residue in the sequence motif Gly-Pro-Hyp, where Hyp is 4-hydroxyproline. Post-translationally, lysine residues at the third position of the tripeptide repeating unit (G-X-Y) are 5-hydroxylated in some or all of the chains. In terms of processing, O-glycosylated on hydroxylated lysine residues. The O-linked glycan consists of a Glc-Gal disaccharide. As to expression, forms the fibrils of tendon, ligaments and bones. In bones the fibrils are mineralized with calcium hydroxyapatite.

The protein resides in the secreted. It localises to the extracellular space. It is found in the extracellular matrix. Type I collagen is a member of group I collagen (fibrillar forming collagen). This chain is Collagen alpha-1(I) chain (COL1A1), found in Bos taurus (Bovine).